Reading from the N-terminus, the 49-residue chain is Large ribosomal subunit protein bL33B (49 aa).

It belongs to the bacterial ribosomal protein bL33 family.

The chain is Large ribosomal subunit protein bL33B from Bacillus velezensis (strain DSM 23117 / BGSC 10A6 / LMG 26770 / FZB42) (Bacillus amyloliquefaciens subsp. plantarum).